The sequence spans 160 residues: Flavodoxin (160 aa).

The Flavodoxin-like domain maps to Ile3–Ala153.

Belongs to the flavodoxin family. The cofactor is FMN.

Its function is as follows. Low-potential electron donor to a number of redox enzymes. This Clostridium saccharobutylicum protein is Flavodoxin (floX).